Reading from the N-terminus, the 545-residue chain is Glucose-6-phosphate isomerase (545 aa).

Residue Glu-351 is the Proton donor of the active site. Active-site residues include His-382 and Lys-510.

The protein belongs to the GPI family.

The protein resides in the cytoplasm. It catalyses the reaction alpha-D-glucose 6-phosphate = beta-D-fructose 6-phosphate. Its pathway is carbohydrate biosynthesis; gluconeogenesis. It functions in the pathway carbohydrate degradation; glycolysis; D-glyceraldehyde 3-phosphate and glycerone phosphate from D-glucose: step 2/4. Catalyzes the reversible isomerization of glucose-6-phosphate to fructose-6-phosphate. This Shewanella pealeana (strain ATCC 700345 / ANG-SQ1) protein is Glucose-6-phosphate isomerase.